The chain runs to 356 residues: Protein pelota homolog (356 aa).

It belongs to the eukaryotic release factor 1 family. Pelota subfamily. As to quaternary structure, monomer. Requires a divalent metal cation as cofactor.

It is found in the cytoplasm. In terms of biological role, may function in recognizing stalled ribosomes, interact with stem-loop structures in stalled mRNA molecules, and effect endonucleolytic cleavage of the mRNA. May play a role in the release non-functional ribosomes and degradation of damaged mRNAs. Has endoribonuclease activity. The polypeptide is Protein pelota homolog (Desulfurococcus amylolyticus (strain DSM 18924 / JCM 16383 / VKM B-2413 / 1221n) (Desulfurococcus kamchatkensis)).